The primary structure comprises 206 residues: Ras-related protein Rab7 (206 aa).

GTP contacts are provided by residues 15–22 (GDSGVGKT), 63–67 (DTAGQ), and 125–128 (NKVD). S-geranylgeranyl cysteine attachment occurs at residues Cys-205 and Cys-206.

It belongs to the small GTPase superfamily. Rab family.

Its subcellular location is the cell membrane. Functionally, protein transport. Probably involved in vesicular traffic. The chain is Ras-related protein Rab7 from Cenchrus ciliaris (Buffelgrass).